A 234-amino-acid chain; its full sequence is MNNIDQTELDKFEKMAATWWDPNGSFKPIHLLNPLRLDYIQQKANGLFGKKVLDVGCGGGILSEAMAKAGANVTGIDMTTEPLDVARKHAEESGLTIDYRQTTIEDFVQNQTACHAEKFDVITCMEMLEHVPDPLSIIQSCKALLKPDGVLFFSTINRTLKAYMLVIIGAEYVLKMLPKGTHEFEKFIKPAELLNWCDMANLRCQEMKGYHFNPLTEKFWLNNDVSCNYIAMLK.

Arg-36, Gly-56, Asp-77, and Met-125 together coordinate S-adenosyl-L-methionine.

This sequence belongs to the methyltransferase superfamily. UbiG/COQ3 family.

It catalyses the reaction a 3-demethylubiquinol + S-adenosyl-L-methionine = a ubiquinol + S-adenosyl-L-homocysteine + H(+). It carries out the reaction a 3-(all-trans-polyprenyl)benzene-1,2-diol + S-adenosyl-L-methionine = a 2-methoxy-6-(all-trans-polyprenyl)phenol + S-adenosyl-L-homocysteine + H(+). It functions in the pathway cofactor biosynthesis; ubiquinone biosynthesis. O-methyltransferase that catalyzes the 2 O-methylation steps in the ubiquinone biosynthetic pathway. The chain is Ubiquinone biosynthesis O-methyltransferase from Actinobacillus pleuropneumoniae serotype 7 (strain AP76).